The following is a 342-amino-acid chain: tRNA N6-adenosine threonylcarbamoyltransferase (342 aa).

His-115 and His-119 together coordinate Fe cation. Substrate contacts are provided by residues 138–142 (LVSGG), Asp-171, Gly-184, and Asn-276. A Fe cation-binding site is contributed by Asp-304.

Belongs to the KAE1 / TsaD family. The cofactor is Fe(2+).

Its subcellular location is the cytoplasm. The catalysed reaction is L-threonylcarbamoyladenylate + adenosine(37) in tRNA = N(6)-L-threonylcarbamoyladenosine(37) in tRNA + AMP + H(+). Its function is as follows. Required for the formation of a threonylcarbamoyl group on adenosine at position 37 (t(6)A37) in tRNAs that read codons beginning with adenine. Is involved in the transfer of the threonylcarbamoyl moiety of threonylcarbamoyl-AMP (TC-AMP) to the N6 group of A37, together with TsaE and TsaB. TsaD likely plays a direct catalytic role in this reaction. The sequence is that of tRNA N6-adenosine threonylcarbamoyltransferase from Dichelobacter nodosus (strain VCS1703A).